Here is a 494-residue protein sequence, read N- to C-terminus: Tripartite motif-containing protein 5 (494 aa).

At alanine 2 the chain carries N-acetylalanine. An RING-type zinc finger spans residues 15–59; that stretch reads CPICLELLTEPLSLDCGHSFCQACITANHKESMLHQGERSCPLCR. A B box-type zinc finger spans residues 91–132; it reads QNVDHCARHGEKLLLFCEQDGNIICWLCERSQEHRGHNTFLV. Zn(2+) contacts are provided by cysteine 96, histidine 99, cysteine 118, and histidine 124. Residues 132 to 223 adopt a coiled-coil conformation; that stretch reads VEEVAQKYRE…RLVQSENDMV (92 aa). A required for interaction with GABARAP and for autophagy region spans residues 186–199; sequence FKQLRDILDCEESN. A B30.2/SPRY domain is found at 280 to 494; it reads PDLKRMLQVL…LPMTLCSPRS (215 aa).

The protein belongs to the TRIM/RBCC family. Can form homodimers and homotrimers. In addition to lower-order dimerization, also exhibits a higher-order multimerization and both low- and high-order multimerizations are essential for its restriction activity. Interacts with BTBD1 and BTBD2. Interacts with PSMC4, PSMC5, PSMD7 and HSPA8/HSC70. Interacts (via B30.2/SPRY domain) with HSPA1A/B. Interacts with PSMC2, MAP3K7/TAK1, TAB2 and TAB3. Interacts with SQSTM1. Interacts with TRIM6 and TRIM34. Interacts with ULK1 (phosphorylated form), GABARAP, GABARAPL1, GABARAPL2, MAP1LC3A, MAP1LC3C and BECN1. Degraded in a proteasome-independent fashion in the absence of viral infection but in a proteasome-dependent fashion following exposure to restriction sensitive virus. Post-translationally, autoubiquitinated in a RING finger- and UBE2D2-dependent manner. Monoubiquitinated by TRIM21. Deubiquitinated by Yersinia YopJ. Ubiquitination may not lead to proteasomal degradation.

Its subcellular location is the cytoplasm. It localises to the nucleus. It catalyses the reaction S-ubiquitinyl-[E2 ubiquitin-conjugating enzyme]-L-cysteine + [acceptor protein]-L-lysine = [E2 ubiquitin-conjugating enzyme]-L-cysteine + N(6)-ubiquitinyl-[acceptor protein]-L-lysine.. It functions in the pathway protein modification; protein ubiquitination. In terms of biological role, capsid-specific restriction factor that prevents infection from non-host-adapted retroviruses. Blocks viral replication early in the life cycle, after viral entry but before reverse transcription. In addition to acting as a capsid-specific restriction factor, also acts as a pattern recognition receptor that activates innate immune signaling in response to the retroviral capsid lattice. Binding to the viral capsid triggers its E3 ubiquitin ligase activity, and in concert with the heterodimeric ubiquitin conjugating enzyme complex UBE2V1-UBE2N (also known as UBC13-UEV1A complex) generates 'Lys-63'-linked polyubiquitin chains, which in turn are catalysts in the autophosphorylation of the MAP3K7/TAK1 complex (includes TAK1, TAB2, and TAB3). Activation of the MAP3K7/TAK1 complex by autophosphorylation results in the induction and expression of NF-kappa-B and MAPK-responsive inflammatory genes, thereby leading to an innate immune response in the infected cell. Restricts infection by simian immunodeficiency virus (SIV-mac). Plays a role in regulating autophagy through activation of autophagy regulator BECN1 by causing its dissociation from its inhibitors BCL2 and TAB2. This Saimiri sciureus (Common squirrel monkey) protein is Tripartite motif-containing protein 5 (TRIM5).